The following is a 311-amino-acid chain: Olfactory receptor 10G9 (311 aa).

Residues 1–23 (MSKTSLVTAFILTGLPHAPGLDA) lie on the Extracellular side of the membrane. Residues 24–44 (PLFGIFLVVYVLTVLGNLLIL) form a helical membrane-spanning segment. Residues 45–52 (LVIRVDSH) are Cytoplasmic-facing. Residues 53-73 (LHTPMYYFLTNLSFIDMWFST) form a helical membrane-spanning segment. Over 74-98 (VTVPKMLMTLVSPSGRAISFHSCVA) the chain is Extracellular. Cysteine 96 and cysteine 188 form a disulfide bridge. The chain crosses the membrane as a helical span at residues 99 to 119 (QLYFFHFLGSTECFLYTVMSY). Residues 120-138 (DRYLAISYPLRYTSMMSGS) lie on the Cytoplasmic side of the membrane. The chain crosses the membrane as a helical span at residues 139 to 159 (RCALLATSTWLSGSLHSAVQT). Over 160–196 (ILTFHLPYCGPNQIQHYLCDAPPILKLACADTSANEM) the chain is Extracellular. A helical transmembrane segment spans residues 197-216 (VIFVDIGLVASGCFLLIVLS). Over 217 to 236 (YVSIVCSILRIHTSEGRHRA) the chain is Cytoplasmic. The helical transmembrane segment at 237–257 (FQTCASHCIVVLCFFVPCVFI) threads the bilayer. Residues 258 to 268 (YLRPGSRDVVD) lie on the Extracellular side of the membrane. The chain crosses the membrane as a helical span at residues 269 to 289 (GVVAIFYTVLTPLLNPVVYTL). At 290 to 311 (RNKEVKKAVLKLRDKVAHSQGE) the chain is on the cytoplasmic side.

Belongs to the G-protein coupled receptor 1 family.

It localises to the cell membrane. Functionally, odorant receptor. The chain is Olfactory receptor 10G9 (OR10G9) from Homo sapiens (Human).